The chain runs to 446 residues: Glycerol-3-phosphate acyltransferase 3 (446 aa).

3 consecutive transmembrane segments (helical) span residues 11 to 31 (IFII…MFGS), 146 to 166 (LRVT…LLPL), and 168 to 188 (ITLA…VGQL). Positions 236 to 241 (HTSPID) match the HXXXXD motif motif.

The protein belongs to the 1-acyl-sn-glycerol-3-phosphate acyltransferase family.

Its subcellular location is the endoplasmic reticulum membrane. The enzyme catalyses sn-glycerol 3-phosphate + an acyl-CoA = a 1-acyl-sn-glycero-3-phosphate + CoA. It catalyses the reaction a 1-acyl-sn-glycero-3-phosphate + an acyl-CoA = a 1,2-diacyl-sn-glycero-3-phosphate + CoA. It carries out the reaction dodecanoyl-CoA + sn-glycerol 3-phosphate = 1-dodecanoyl-sn-glycerol 3-phosphate + CoA. The catalysed reaction is sn-glycerol 3-phosphate + hexadecanoyl-CoA = 1-hexadecanoyl-sn-glycero-3-phosphate + CoA. The enzyme catalyses sn-glycerol 3-phosphate + (9Z)-octadecenoyl-CoA = 1-(9Z-octadecenoyl)-sn-glycero-3-phosphate + CoA. It catalyses the reaction (9Z,12Z)-octadecadienoyl-CoA + sn-glycerol 3-phosphate = 1-(9Z,12Z)-octadecadienoyl-sn-glycero-3-phosphate + CoA. It carries out the reaction 1-tetradecanoyl-sn-glycerol 3-phosphate + (9Z)-octadecenoyl-CoA = 1-tetradecanoyl-2-(9Z)-octadecenoyl-sn-glycero-3-phosphate + CoA. The catalysed reaction is 1-hexadecanoyl-sn-glycero-3-phosphate + (9Z)-octadecenoyl-CoA = 1-hexadecanoyl-2-(9Z-octadecenoyl)-sn-glycero-3-phosphate + CoA. The enzyme catalyses 1-(9Z-octadecenoyl)-sn-glycero-3-phosphate + (9Z)-octadecenoyl-CoA = 1,2-di-(9Z-octadecenoyl)-sn-glycero-3-phosphate + CoA. It catalyses the reaction 1-(6Z,9Z,12Z-octadecatrienoyl)-sn-glycero-3-phosphate + (9Z)-octadecenoyl-CoA = (6Z,9Z,12Z)-octadecatrienoyl-2-(9Z)-octadecenoyl-sn-glycero-3-phosphate + CoA. It carries out the reaction 1-(9Z,12Z,15Z)-octadecatrienoyl-sn-glycero-3-phosphate + (9Z)-octadecenoyl-CoA = 1-(9Z,12Z,15Z)-octadecatrienoyl-2-(9Z)-octadecenoyl-sn-glycero-3-phosphate + CoA. The catalysed reaction is 1-(9Z-octadecenoyl)-sn-glycero-3-phosphate + tetradecanoyl-CoA = 1-(9Z)-octadecenoyl-2-tetradecanoyl-sn-glycero-3-phosphate + CoA. The enzyme catalyses 1-(9Z-octadecenoyl)-sn-glycero-3-phosphate + hexadecanoyl-CoA = 1-(9Z)-octadecenoyl-2-hexadecanoyl-sn-glycero-3-phosphate + CoA. It catalyses the reaction 1-(9Z-octadecenoyl)-sn-glycero-3-phosphate + octadecanoyl-CoA = 1-(9Z-octadecenoyl)-2-octadecanoyl-sn-glycero-3-phosphate + CoA. It carries out the reaction 1-(9Z-octadecenoyl)-sn-glycero-3-phosphate + (9Z,12Z)-octadecadienoyl-CoA = 1-(9Z)-octadecenoyl-2-(9Z,12Z)-octadecadienoyl-sn-glycero-3-phosphate + CoA. The catalysed reaction is 1-(5Z,8Z,11Z,14Z-eicosatetraenoyl)-sn-glycero-3-phosphate + (9Z)-octadecenoyl-CoA = 1-(5Z,8Z,11Z,14Z)-eicosatetraenoyl-2-(9Z)-octadecenoyl-sn-glycero-3-phosphate + CoA. The protein operates within glycerolipid metabolism; triacylglycerol biosynthesis. Its pathway is phospholipid metabolism; CDP-diacylglycerol biosynthesis; CDP-diacylglycerol from sn-glycerol 3-phosphate: step 1/3. Functionally, converts glycerol-3-phosphate to 1-acyl-sn-glycerol-3-phosphate (lysophosphatidic acid or LPA) by incorporating an acyl moiety at the sn-1 position of the glycerol backbone. Also converts LPA into 1,2-diacyl-sn-glycerol-3-phosphate (phosphatidic acid or PA) by incorporating an acyl moiety at the sn-2 position of the glycerol backbone. Protects cells against lipotoxicity. The chain is Glycerol-3-phosphate acyltransferase 3 from Xenopus laevis (African clawed frog).